The primary structure comprises 193 residues: Cysteine and glycine-rich protein 1 (193 aa).

The region spanning 10–61 (CGVCQKTVYFAEEVQCEGNSFHKSCFLCMVCKKNLDSTTVAVHGEEIYCKSC) is the LIM zinc-binding 1 domain. The short motif at 64–69 (KKYGPK) is the Nuclear localization signal element. S81 is modified (phosphoserine). K84 is subject to N6-acetyllysine. K91 is covalently cross-linked (Glycyl lysine isopeptide (Lys-Gly) (interchain with G-Cter in SUMO2)). 4 positions are modified to N6-acetyllysine: K112, K131, K137, and K161. An LIM zinc-binding 2 domain is found at 119–170 (CPRCSQAVYAAEKVIGAGKSWHKACFRCAKCGKGLESTTLADKDGEIYCKGC). S192 carries the post-translational modification Phosphoserine.

Interacts with ASCC1; ASCC2 and TRIP4.

It localises to the nucleus. Its function is as follows. Could play a role in neuronal development. This Homo sapiens (Human) protein is Cysteine and glycine-rich protein 1 (CSRP1).